The chain runs to 357 residues: MLDKLAFLQEKYEDLGEKISDPEIINDQVQWQKLIKEHSEIEPIVMKYREYKTTQQALGETKEIMHDKATDAELKEMAKMEVEELEESIVEMEEQLKVMLLPTDPNDDKNVIVEIRGGAGGDEAGLFAAVLFRMYTRYAERSGWKVEMMSLNESGVGGYKEVIFMIKGKGAYSQLKYESGAHRVQRIPTTESGGRIHTSTATVVIMPEAEDVGEVNIDTNELRIDVFRSSGNGGQSVNTTDSAVRITHLPTGLVVSCQDGKSQLKNKEKAMKVLKSRLLDQMIQEQDAEISQDRRSKVGTGDRSERIRTYNFPQGRVTDHRINVTVYKLDAFLDGEINEMIDSLITSAQAEKMQEVQ.

An N5-methylglutamine modification is found at Q235.

The protein belongs to the prokaryotic/mitochondrial release factor family. In terms of processing, methylated by PrmC. Methylation increases the termination efficiency of RF1.

The protein localises to the cytoplasm. In terms of biological role, peptide chain release factor 1 directs the termination of translation in response to the peptide chain termination codons UAG and UAA. This is Peptide chain release factor 1 from Alkaliphilus metalliredigens (strain QYMF).